The sequence spans 355 residues: MSAVLARPDPTDAAARIRTLAREAGFQRCGITGIELGEDEAHLRSWLAEGLYGTMHWMAQHGDKRSRPQELVPGTLRVLSVGMDYGRKDDTEAWDTLHDGRRAYVARYALGRDYHKLMRNRLQKLAERIQAEVGPFGYRVFVDSAPVLERALARNAGLGWIGKHTCLIDRGGGSWFFLGEIYLDLPLPIDTPATAHCGTCTRCIDICPTQAIIAPHRLDARRCIAYLTIEHDGAIPEDMRKPIGNRIFGCDDCQLICPWNKFAQRTDEPDFRARNDLDVATLPQLFAWDEAEFLRRTEGSPIRRSGHERWLRNIAVGLGNAPGSEDVLAALESRRHDDSALVREHVGWALAQHGL.

The active-site Proton donor is the Asp-143. One can recognise a 4Fe-4S ferredoxin-type domain in the interval Leu-185–Arg-217. Residues Cys-197, Cys-200, Cys-203, Cys-207, Cys-223, Cys-250, Cys-253, and Cys-257 each contribute to the [4Fe-4S] cluster site.

This sequence belongs to the QueG family. As to quaternary structure, monomer. It depends on cob(II)alamin as a cofactor. [4Fe-4S] cluster serves as cofactor.

It localises to the cytoplasm. It carries out the reaction epoxyqueuosine(34) in tRNA + AH2 = queuosine(34) in tRNA + A + H2O. Its pathway is tRNA modification; tRNA-queuosine biosynthesis. Catalyzes the conversion of epoxyqueuosine (oQ) to queuosine (Q), which is a hypermodified base found in the wobble positions of tRNA(Asp), tRNA(Asn), tRNA(His) and tRNA(Tyr). This is Epoxyqueuosine reductase from Xanthomonas campestris pv. campestris (strain ATCC 33913 / DSM 3586 / NCPPB 528 / LMG 568 / P 25).